We begin with the raw amino-acid sequence, 433 residues long: N-lysine methyltransferase SMYD2 (433 aa).

In terms of domain architecture, SET spans 7-241; that stretch reads GGLERFCSPG…PGEEVFTSYI (235 aa). 17-19 provides a ligand contact to S-adenosyl-L-methionine; it reads KGR. Residues Cys52, Cys55, Cys65, Cys68, Cys74, Cys78, His86, and Cys90 each contribute to the Zn(2+) site. The MYND-type zinc-finger motif lies at 52–90; sequence CEFCFARKEGLSKCGRCKQAFYCNVECQKEDWPMHKLEC. S-adenosyl-L-methionine is bound by residues His137, 206–207, and 258–260; these read NH and YFF.

This sequence belongs to the class V-like SAM-binding methyltransferase superfamily. Interacts with RNA polymerase II and HELZ. Interacts with SIN3A and HDAC1. Interacts (via MYND-type zinc finger) with EPB41L3. Interacts (via SET domain) with p53/TP53. Interacts with RB1 and HSP90AA1.

It is found in the cytoplasm. The protein resides in the cytosol. Its subcellular location is the nucleus. It carries out the reaction L-lysyl(4)-[histone H3] + 3 S-adenosyl-L-methionine = N(6),N(6),N(6)-trimethyl-L-lysyl(4)-[histone H3] + 3 S-adenosyl-L-homocysteine + 3 H(+). The enzyme catalyses L-lysyl-[protein] + S-adenosyl-L-methionine = N(6)-methyl-L-lysyl-[protein] + S-adenosyl-L-homocysteine + H(+). Its function is as follows. Protein-lysine N-methyltransferase that methylates both histones and non-histone proteins, including p53/TP53 and RB1. Specifically trimethylates histone H3 'Lys-4' (H3K4me3) in vivo. The activity requires interaction with HSP90alpha. Shows even higher methyltransferase activity on p53/TP53. Monomethylates 'Lys-370' of p53/TP53, leading to decreased DNA-binding activity and subsequent transcriptional regulation activity of p53/TP53. Monomethylates RB1 at 'Lys-860'. This is N-lysine methyltransferase SMYD2 (SMYD2) from Sus scrofa (Pig).